Consider the following 497-residue polypeptide: Glycerol kinase (497 aa).

Threonine 11 is a binding site for ADP. The ATP site is built by threonine 11, threonine 12, and serine 13. Threonine 11 provides a ligand contact to sn-glycerol 3-phosphate. Arginine 15 is an ADP binding site. Residues arginine 81, glutamate 82, tyrosine 133, and aspartate 242 each coordinate sn-glycerol 3-phosphate. Glycerol is bound by residues arginine 81, glutamate 82, tyrosine 133, aspartate 242, and glutamine 243. ADP contacts are provided by threonine 264 and glycine 306. ATP contacts are provided by threonine 264, glycine 306, glutamine 310, and glycine 407. 2 residues coordinate ADP: glycine 407 and asparagine 411.

It belongs to the FGGY kinase family.

The enzyme catalyses glycerol + ATP = sn-glycerol 3-phosphate + ADP + H(+). It functions in the pathway polyol metabolism; glycerol degradation via glycerol kinase pathway; sn-glycerol 3-phosphate from glycerol: step 1/1. Its activity is regulated as follows. Inhibited by fructose 1,6-bisphosphate (FBP). Its function is as follows. Key enzyme in the regulation of glycerol uptake and metabolism. Catalyzes the phosphorylation of glycerol to yield sn-glycerol 3-phosphate. This is Glycerol kinase from Alcanivorax borkumensis (strain ATCC 700651 / DSM 11573 / NCIMB 13689 / SK2).